The chain runs to 114 residues: uncharacterized protein (114 aa).

This is an uncharacterized protein from Saccharomyces cerevisiae (strain ATCC 204508 / S288c) (Baker's yeast).